Here is a 660-residue protein sequence, read N- to C-terminus: Septation initiation protein sid4 (660 aa).

Disordered regions lie at residues 79–243 (TKKE…QQHF), 368–396 (STTV…PDTK), and 459–503 (RHTS…PAKN). Composition is skewed to polar residues over residues 125-138 (SFNS…STPY), 156-176 (SNSP…QSPK), and 222-243 (RPNQ…QQHF). Positions 384 to 396 (STKDFKEQKPDTK) are enriched in basic and acidic residues. 2 stretches are compositionally biased toward polar residues: residues 459 to 480 (RHTS…ITTK) and 488 to 497 (KENTMLNDGS).

In terms of assembly, homodimer. Interacts with cdc11, sad1, plo1 and dma1.

The protein localises to the cytoplasm. Its subcellular location is the cytoskeleton. It is found in the microtubule organizing center. The protein resides in the spindle pole body. Its function is as follows. Required for activation of the spg1 GTPase signaling cascade which leads to the initiation of septation and the subsequent termination of mitosis. May act as a scaffold at the spindle pole body to which other components of the spg1 signaling cascade attach. This is Septation initiation protein sid4 (sid4) from Schizosaccharomyces pombe (strain 972 / ATCC 24843) (Fission yeast).